The primary structure comprises 254 residues: Phycobilisome rod-core linker polypeptide CpcG3 (254 aa).

The PBS-linker domain maps to 11–191 (SSQNHRVKSF…DFQETAGTVK (181 aa)).

It belongs to the phycobilisome linker protein family. As to quaternary structure, the phycobilisome is a hemidiscoidal structure that is composed of two distinct substructures: a core complex and a number of rods radiating from the core.

It is found in the cellular thylakoid membrane. In terms of biological role, rod-core linker protein required for attachment of phycocyanin to allophycocyanin in cores of phycobilisomes. Its function is as follows. Linker polypeptides determine the state of aggregation and the location of the disk-shaped phycobiliprotein units within the phycobilisome and modulate their spectroscopic properties in order to mediate a directed and optimal energy transfer. In Mastigocladus laminosus (Fischerella sp.), this protein is Phycobilisome rod-core linker polypeptide CpcG3 (cpcG3).